The primary structure comprises 183 residues: MSNHAVANRYAVALFELAQEKGLHESFVSELELIKAVFQDTPELMQFLTHPKTELTQKRELLEKTFKGKVNDTIFNTLVVLVERKRIDLIIPVVQKFKSLSYDAQKIAEAFVYSAKPLSEAEKDQLSVLFAKKVGKAKLLIENIVDPSIIGGLKIRIGDRIYDGSIKGQLDVLHRELVSGPRS.

It belongs to the ATPase delta chain family. In terms of assembly, F-type ATPases have 2 components, F(1) - the catalytic core - and F(0) - the membrane proton channel. F(1) has five subunits: alpha(3), beta(3), gamma(1), delta(1), epsilon(1). F(0) has three main subunits: a(1), b(2) and c(10-14). The alpha and beta chains form an alternating ring which encloses part of the gamma chain. F(1) is attached to F(0) by a central stalk formed by the gamma and epsilon chains, while a peripheral stalk is formed by the delta and b chains.

It localises to the cell membrane. Functionally, f(1)F(0) ATP synthase produces ATP from ADP in the presence of a proton or sodium gradient. F-type ATPases consist of two structural domains, F(1) containing the extramembraneous catalytic core and F(0) containing the membrane proton channel, linked together by a central stalk and a peripheral stalk. During catalysis, ATP synthesis in the catalytic domain of F(1) is coupled via a rotary mechanism of the central stalk subunits to proton translocation. This protein is part of the stalk that links CF(0) to CF(1). It either transmits conformational changes from CF(0) to CF(1) or is implicated in proton conduction. The sequence is that of ATP synthase subunit delta from Halalkalibacterium halodurans (strain ATCC BAA-125 / DSM 18197 / FERM 7344 / JCM 9153 / C-125) (Bacillus halodurans).